A 359-amino-acid chain; its full sequence is Dual-specificity RNA methyltransferase RlmN (359 aa).

E90 functions as the Proton acceptor in the catalytic mechanism. In terms of domain architecture, Radical SAM core spans 109–342 (HQERYTVCIS…CTIRESKGLD (234 aa)). C116 and C347 are oxidised to a cystine. The [4Fe-4S] cluster site is built by C123, C127, and C130. S-adenosyl-L-methionine-binding positions include 173-174 (GE), S205, 228-230 (SLH), and N304. Catalysis depends on C347, which acts as the S-methylcysteine intermediate.

The protein belongs to the radical SAM superfamily. RlmN family. It depends on [4Fe-4S] cluster as a cofactor.

It is found in the cytoplasm. The enzyme catalyses adenosine(2503) in 23S rRNA + 2 reduced [2Fe-2S]-[ferredoxin] + 2 S-adenosyl-L-methionine = 2-methyladenosine(2503) in 23S rRNA + 5'-deoxyadenosine + L-methionine + 2 oxidized [2Fe-2S]-[ferredoxin] + S-adenosyl-L-homocysteine. It catalyses the reaction adenosine(37) in tRNA + 2 reduced [2Fe-2S]-[ferredoxin] + 2 S-adenosyl-L-methionine = 2-methyladenosine(37) in tRNA + 5'-deoxyadenosine + L-methionine + 2 oxidized [2Fe-2S]-[ferredoxin] + S-adenosyl-L-homocysteine. Functionally, specifically methylates position 2 of adenine 2503 in 23S rRNA and position 2 of adenine 37 in tRNAs. m2A2503 modification seems to play a crucial role in the proofreading step occurring at the peptidyl transferase center and thus would serve to optimize ribosomal fidelity. The sequence is that of Dual-specificity RNA methyltransferase RlmN from Sulfurovum sp. (strain NBC37-1).